A 699-amino-acid chain; its full sequence is SPS-sensor serine protease component SSY5 (699 aa).

2 disordered regions span residues 1-113 (MVRF…LQGF) and 129-158 (VKEE…GNAR). Residues 1-381 (MVRFFGLNKE…YCVKDYIKKA (381 aa)) constitute a propeptide that is removed on maturation. Positions 8 to 18 (NKEKNEEKENT) are enriched in basic and acidic residues. Residues 24 to 38 (NEQNAAETSSSNVSG) show a composition bias toward polar residues. Residues 39–51 (NEERIDPNSRDTN) show a composition bias toward basic and acidic residues. Low complexity predominate over residues 61 to 78 (STTFGSSIQSSSIFSRGR). The segment covering 83-93 (TGASSSMATSE) has biased composition (polar residues). A compositionally biased stretch (low complexity) spans 144–154 (SSSTSSTLATS). Residues 459-699 (FAITCAHVVL…QWDIDPQLDG (241 aa)) are serine protease. Active-site charge relay system residues include His-465, Asp-545, and Ser-640.

The protein belongs to the peptidase S64 family. In terms of assembly, component of the plasma membrane SPS (SSY1-PTR3-SSY5) amino acid sensor complex. In terms of processing, the propeptide is autoproteolytically cleaved from the catalytic domain but remains associated, forming an inactive protease complex. This processing occurs even in the absence of signaling.

The protein localises to the cell membrane. Its function is as follows. Protease component of the SPS-sensor system, which regulates the expression of several amino acid-metabolizing enzymes and amino acid- and peptide-permeases in response to extracellular amino acid levels by controlling the activity of two transcription factors, STP1 and STP2. Catalyzes the activation of these transcription factors, which are synthesized as latent cytoplasmic precursors, by proteolytic removal of an N-terminal inhibitory domain containing cytoplasmic retention motifs. SSY5 binds as an inactive protease complex to STP1. In response to extracellular amino acids and dependent on the other SPS-sensor components, the inhibitory propeptide is induced to dissociate, and thereby enables the catalytic domain to process STP1. The chain is SPS-sensor serine protease component SSY5 (SSY5) from Saccharomyces cerevisiae (strain AWRI1631) (Baker's yeast).